The chain runs to 409 residues: Tryptophan synthase beta chain (409 aa).

Lys95 is subject to N6-(pyridoxal phosphate)lysine.

This sequence belongs to the TrpB family. Tetramer of two alpha and two beta chains. The cofactor is pyridoxal 5'-phosphate.

The enzyme catalyses (1S,2R)-1-C-(indol-3-yl)glycerol 3-phosphate + L-serine = D-glyceraldehyde 3-phosphate + L-tryptophan + H2O. It participates in amino-acid biosynthesis; L-tryptophan biosynthesis; L-tryptophan from chorismate: step 5/5. Its function is as follows. The beta subunit is responsible for the synthesis of L-tryptophan from indole and L-serine. In Pseudomonas savastanoi pv. phaseolicola (Pseudomonas syringae pv. phaseolicola), this protein is Tryptophan synthase beta chain.